The following is a 345-amino-acid chain: UDP-3-O-acylglucosamine N-acyltransferase (345 aa).

The Proton acceptor role is filled by His-248.

Belongs to the transferase hexapeptide repeat family. LpxD subfamily. In terms of assembly, homotrimer.

The enzyme catalyses a UDP-3-O-[(3R)-3-hydroxyacyl]-alpha-D-glucosamine + a (3R)-hydroxyacyl-[ACP] = a UDP-2-N,3-O-bis[(3R)-3-hydroxyacyl]-alpha-D-glucosamine + holo-[ACP] + H(+). It participates in bacterial outer membrane biogenesis; LPS lipid A biosynthesis. Functionally, catalyzes the N-acylation of UDP-3-O-acylglucosamine using 3-hydroxyacyl-ACP as the acyl donor. Is involved in the biosynthesis of lipid A, a phosphorylated glycolipid that anchors the lipopolysaccharide to the outer membrane of the cell. This is UDP-3-O-acylglucosamine N-acyltransferase from Trichodesmium erythraeum (strain IMS101).